Here is a 299-residue protein sequence, read N- to C-terminus: MTREQYILATQQNNLPRTENAQLYPVGIYGWRKRCLYFFVLLLLVTMIVNLAMTIWILKVMNFTVDGMGNLRVTKKGIRLEGISEFLLPLYVKEIHSRKDSPLVLQSDRNVTVNARNHMGQLTGQLTIGADAVEAQCKRFEVRASEDGRVLFSADEDEITIGAEKLKVTGTEGAVFGHSVETPHIRAEPSQDLRLESPTRSLIMEAPRGVQVSAAAGDFKATCRKELHLQSTEGEIFLNAETIKLGNLPTGSFSSSSPSSSSSRQTVYELCVCPNGKLYLSPAGVGSTCQSSSNICLWS.

Residues 1-37 (MTREQYILATQQNNLPRTENAQLYPVGIYGWRKRCLY) lie on the Cytoplasmic side of the membrane. A helical; Signal-anchor for type II membrane protein membrane pass occupies residues 38–58 (FFVLLLLVTMIVNLAMTIWIL). At 59-299 (KVMNFTVDGM…QSSSNICLWS (241 aa)) the chain is on the extracellular side. N-linked (GlcNAc...) asparagine glycosylation is found at Asn62 and Asn110. Cys273 and Cys289 are joined by a disulfide.

Belongs to the sarcoglycan beta/delta/gamma/zeta family.

The protein localises to the cell membrane. It localises to the sarcolemma. The protein resides in the cytoplasm. Its subcellular location is the cytoskeleton. Functionally, component of the sarcoglycan complex, a subcomplex of the dystrophin-glycoprotein complex which forms a link between the F-actin cytoskeleton and the extracellular matrix. May play a role in the maintenance of striated muscle membrane stability. The sequence is that of Zeta-sarcoglycan (SGCZ) from Homo sapiens (Human).